A 291-amino-acid chain; its full sequence is MTTLAIDIGGTKLAAALIGADGQIRDRRELPTPASQTPEALRDALSALVSPLQVHAQRVAIASTGIIRDGSLLALNPHNLGGLLHFPLVKTLEQLTDLPTIAINDAQAAAWAEYQALEGDITEMVFITVSTGVGGGVVSGGKLLTGPGGLAGHIGHTLADPHGPVCGCGRTGCVEAIASGRGIAAAAQGELAGANAKTIFTHAGQGDEQAQQLIHRSARTLARLIADIKATTDCQCVVVGGSVGLAEGYLALVETYLAQEPAAFHVDLLAAHYRHDAGLLGAALLALGEKL.

ATP contacts are provided by residues 5 to 12 and 132 to 139; these read AIDIGGTK and GVGGGVVS. H156, C166, C168, and C173 together coordinate Zn(2+).

This sequence belongs to the ROK (NagC/XylR) family. NanK subfamily. As to quaternary structure, homodimer.

It carries out the reaction an N-acyl-D-mannosamine + ATP = an N-acyl-D-mannosamine 6-phosphate + ADP + H(+). It functions in the pathway amino-sugar metabolism; N-acetylneuraminate degradation; D-fructose 6-phosphate from N-acetylneuraminate: step 2/5. Its function is as follows. Catalyzes the phosphorylation of N-acetylmannosamine (ManNAc) to ManNAc-6-P. In Escherichia coli O7:K1 (strain IAI39 / ExPEC), this protein is N-acetylmannosamine kinase.